The following is a 506-amino-acid chain: Sucrose transport protein SUT3 (506 aa).

Over 1 to 20 (MAVDMELDGGGDGKGKAPPQ) the chain is Cytoplasmic. Residues 21–41 (ISLSGLFLACMVAGGVQYGWA) traverse the membrane as a helical segment. The Extracellular portion of the chain corresponds to 42-54 (LQLSLLTPYIQTL). The helical transmembrane segment at 55–75 (GIPHALTSVMWLCGPIAGLIV) threads the bilayer. The Cytoplasmic segment spans residues 76–94 (QPCVGLYSDKCTSSLGRRR). Residues 95-115 (PFILTGCIIICISVIVIGFSS) traverse the membrane as a helical segment. Residues 116–135 (DIGYALGDATEDCKVYRGPR) are Extracellular-facing. The chain crosses the membrane as a helical span at residues 136-156 (YHAAAAFILGFWLLDFSNNTV). Over 157 to 171 (QGPARALMADLSGRH) the chain is Cytoplasmic. A helical transmembrane segment spans residues 172–192 (GPSAANAIFCSWMALGNILGY). The Extracellular portion of the chain corresponds to 193–220 (SSGSTNDWHKWFPFLMTRACCEACANLK). Residues 221-241 (AAFLVAVVFLGLSTAVTMVFA) traverse the membrane as a helical segment. Over 242–275 (REVALDPVAAAKRNEGEASGPLAVFKGMKNLPVG) the chain is Cytoplasmic. The helical transmembrane segment at 276 to 296 (MPSVLIVTGLTWLSWFPFILF) threads the bilayer. Over 297-327 (DTDWMGREIYHGRPDGSPAEVTAFQEGVRQG) the chain is Extracellular. The chain crosses the membrane as a helical span at residues 328 to 348 (AFGLLLNSIVLGISSFLIEPM). Over 349-355 (CRRLGAR) the chain is Cytoplasmic. Residues 356–376 (AVWVMSSAVVCVAMAAVSVLS) traverse the membrane as a helical segment. Residues 377–404 (AWSLGDFGGSVQDAARAPAEEGGVRASA) are Extracellular-facing. Residues 405 to 425 (LALFVFLGLPFAVLCSVPFAV) form a helical membrane-spanning segment. Over 426-441 (TAQLTASRGGGQGLCT) the chain is Cytoplasmic. The helical transmembrane segment at 442–462 (GVLNISIVVPQMAIALGAGPW) threads the bilayer. Over 463 to 470 (DELFGEGN) the chain is Extracellular. The helical transmembrane segment at 471–491 (IPAFAMASVFAAAAAAAGVVL) threads the bilayer. Residues 492 to 506 (LPKVSVRSVSMAGGH) lie on the Cytoplasmic side of the membrane.

Belongs to the glycoside-pentoside-hexuronide (GPH) cation symporter transporter (TC 2.A.2.4) family. Homodimer.

The protein resides in the cell membrane. The protein operates within glycan biosynthesis; sucrose metabolism. Responsible for the transport of sucrose into the cell, with the concomitant uptake of protons (symport system). May also transport other glucosides. This is Sucrose transport protein SUT3 (SUT3) from Oryza sativa subsp. indica (Rice).